A 229-amino-acid polypeptide reads, in one-letter code: E3 ubiquitin ligase TRIM40 (229 aa).

The RING-type zinc-finger motif lies at 14–57 (CPICQESLKEAVSTNCGHLFCRVCLTQHVEKASASGVFCCPLCR). The B box-type zinc finger occupies 66-107 (GTGYICPNHQKRVCRFCEESRLLLCVECLVSPEHMSHHELTI). Positions 71, 74, 93, and 99 each coordinate Zn(2+). Residues 107 to 154 (IENALSHYKERLNRRSRKLRKDIAELQRLKAQQEKKLQALQQWLGQLE) adopt a coiled-coil conformation.

The protein belongs to the TRIM/RBCC family. As to quaternary structure, interacts with NEDD8.

The catalysed reaction is S-ubiquitinyl-[E2 ubiquitin-conjugating enzyme]-L-cysteine + [acceptor protein]-L-lysine = [E2 ubiquitin-conjugating enzyme]-L-cysteine + N(6)-ubiquitinyl-[acceptor protein]-L-lysine.. E3 ubiquitin-protein ligase that plays a role in the limitation of the innate immune response. Mediates inhibition of the RLR signaling pathway by ubiquitinating RIGI and IFIH1 receptors, leading to their proteasomal degradation. Also promotes the neddylation of IKBKG/NEMO, stabilizing NFKBIA, and thereby inhibiting of NF-kappa-B nuclear translocation and activation. This chain is E3 ubiquitin ligase TRIM40 (TRIM40), found in Pan troglodytes (Chimpanzee).